The primary structure comprises 378 residues: Alkanesulfonate monooxygenase (378 aa).

This sequence belongs to the SsuD family.

The catalysed reaction is an alkanesulfonate + FMNH2 + O2 = an aldehyde + FMN + sulfite + H2O + 2 H(+). Functionally, catalyzes the desulfonation of aliphatic sulfonates. The polypeptide is Alkanesulfonate monooxygenase (Bacillus velezensis (strain DSM 23117 / BGSC 10A6 / LMG 26770 / FZB42) (Bacillus amyloliquefaciens subsp. plantarum)).